The sequence spans 61 residues: Metallothionein-2 (61 aa).

M1 bears the N-acetylmethionine mark. Positions 1–29 (MDPNCSCAAGDSCTCAGSCKCKECKCTSC) are beta. Residues C5, C7, C13, C15, C19, C21, C24, C26, C29, C33, C34, C36, C37, C41, C44, C48, C50, and C57 each coordinate a divalent metal cation. The alpha stretch occupies residues 30–61 (KKSCCSCCPVGCAKCAQGCICKGASDKCSCCA). The residue at position 58 (S58) is a Phosphoserine. Residues C59 and C60 each contribute to the a divalent metal cation site.

Belongs to the metallothionein superfamily. Type 1 family. Interacts with EOLA1.

In terms of biological role, metallothioneins have a high content of cysteine residues that bind various heavy metals; these proteins are transcriptionally regulated by both heavy metals and glucocorticoids. This is Metallothionein-2 from Homo sapiens (Human).